A 423-amino-acid chain; its full sequence is ATP-citrate synthase alpha chain protein 2 (423 aa).

Positions 343, 345, and 376 each coordinate citrate.

It belongs to the succinate/malate CoA ligase beta subunit family. Heterooctamer of 4 alpha and 4 beta chains.

It is found in the cytoplasm. It localises to the cytosol. It carries out the reaction oxaloacetate + acetyl-CoA + ADP + phosphate = citrate + ATP + CoA. ATP citrate-lyase is the primary enzyme responsible for the synthesis of cytosolic acetyl-CoA, used for the elongation of fatty acids and biosynthesis of isoprenoids, flavonoids and malonated derivatives. May supply substrate to the cytosolic acetyl-CoA carboxylase, which generates the malonyl-CoA used for the synthesis of a multitude of compounds, including very long chain fatty acids and flavonoids. Required for normal growth and development and elongation of C18 fatty acids to C20 to C24 fatty acids in seeds. In contrast to all known animal ACL enzymes having a homomeric structure, plant ACLs are composed of alpha and beta chains. In Arabidopsis thaliana (Mouse-ear cress), this protein is ATP-citrate synthase alpha chain protein 2 (ACLA-2).